A 96-amino-acid polypeptide reads, in one-letter code: RNA-binding protein Hfq (96 aa).

A Sm domain is found at 9-68 (DPFLNALRRERVPVSIYLVNGIKLQGQIESFDQFVILLKNTVSQMVYKHAISTVVPSRPV). Residues 64-96 (PSRPVSHHSNTGTNQAGTNYSGGNATQQDDVAE) form a disordered region. Over residues 70 to 96 (HHSNTGTNQAGTNYSGGNATQQDDVAE) the composition is skewed to polar residues.

This sequence belongs to the Hfq family. As to quaternary structure, homohexamer.

RNA chaperone that binds small regulatory RNA (sRNAs) and mRNAs to facilitate mRNA translational regulation in response to envelope stress, environmental stress and changes in metabolite concentrations. Also binds with high specificity to tRNAs. The sequence is that of RNA-binding protein Hfq from Proteus mirabilis (strain HI4320).